A 182-amino-acid polypeptide reads, in one-letter code: Lipoprotein signal peptidase (182 aa).

4 consecutive transmembrane segments (helical) span residues 12-32 (FLWISALAFILDQWSKYTVID), 40-60 (IQVLPFFNFTYVHNYGAAFSF), 70-90 (WFFTAIAVVVSVVILWWLKQS), and 97-117 (LPVAFAFILGGALGNVYDRLV). Catalysis depends on residues Asp123 and Asp141. A helical transmembrane segment spans residues 136 to 156 (AFNIADSAIFIGAALLIIDMF). Residues 161 to 182 (KKSEENGAESKAGSANSSETIK) are disordered. Residues 173 to 182 (GSANSSETIK) show a composition bias toward polar residues.

The protein belongs to the peptidase A8 family.

The protein resides in the cell inner membrane. It catalyses the reaction Release of signal peptides from bacterial membrane prolipoproteins. Hydrolyzes -Xaa-Yaa-Zaa-|-(S,diacylglyceryl)Cys-, in which Xaa is hydrophobic (preferably Leu), and Yaa (Ala or Ser) and Zaa (Gly or Ala) have small, neutral side chains.. It functions in the pathway protein modification; lipoprotein biosynthesis (signal peptide cleavage). In terms of biological role, this protein specifically catalyzes the removal of signal peptides from prolipoproteins. This chain is Lipoprotein signal peptidase, found in Alteromonas mediterranea (strain DSM 17117 / CIP 110805 / LMG 28347 / Deep ecotype).